The primary structure comprises 344 residues: Phosphate acyltransferase (344 aa).

This sequence belongs to the PlsX family. As to quaternary structure, homodimer. Probably interacts with PlsY.

It is found in the cytoplasm. It carries out the reaction a fatty acyl-[ACP] + phosphate = an acyl phosphate + holo-[ACP]. Its pathway is lipid metabolism; phospholipid metabolism. Catalyzes the reversible formation of acyl-phosphate (acyl-PO(4)) from acyl-[acyl-carrier-protein] (acyl-ACP). This enzyme utilizes acyl-ACP as fatty acyl donor, but not acyl-CoA. The polypeptide is Phosphate acyltransferase (Cronobacter sakazakii (strain ATCC BAA-894) (Enterobacter sakazakii)).